The chain runs to 1677 residues: Pentafunctional AROM polypeptide (1677 aa).

Positions 1–394 are 3-dehydroquinate synthase; that stretch reads MAVADDTKAD…YEQKASIVED (394 aa). NAD(+)-binding positions include 50–52, 89–92, 120–122, and aspartate 125; these read DDN, ETSK, and GGV. Arginine 136 is a binding site for 7-phospho-2-dehydro-3-deoxy-D-arabino-heptonate. Position 145 to 146 (145 to 146) interacts with NAD(+); sequence TT. 7-phospho-2-dehydro-3-deoxy-D-arabino-heptonate is bound by residues aspartate 152 and lysine 158. Lysine 167 is an NAD(+) binding site. Residue asparagine 168 participates in 7-phospho-2-dehydro-3-deoxy-D-arabino-heptonate binding. NAD(+)-binding positions include 185–188 and asparagine 196; that span reads YLET. Glutamate 200 provides a ligand contact to Zn(2+). Residues 200-203 and lysine 260 each bind 7-phospho-2-dehydro-3-deoxy-D-arabino-heptonate; that span reads EVVK. Glutamate 270 acts as the Proton acceptor; for 3-dehydroquinate synthase activity in catalysis. Residues 274–278 and histidine 281 each bind 7-phospho-2-dehydro-3-deoxy-D-arabino-heptonate; that span reads RNLVN. A Zn(2+)-binding site is contributed by histidine 281. Histidine 285 acts as the Proton acceptor; for 3-dehydroquinate synthase activity in catalysis. 7-phospho-2-dehydro-3-deoxy-D-arabino-heptonate-binding residues include histidine 297 and lysine 366. Histidine 297 is a Zn(2+) binding site. The tract at residues 407–858 is EPSP synthase; sequence VVPSIPTGNV…WDDLENKIGI (452 aa). The active-site For EPSP synthase activity is the cysteine 840. The segment at 885 to 1113 is shikimate kinase; the sequence is NSSILLIGMR…GQQRRTYFLC (229 aa). Position 892–899 (892–899) interacts with ATP; sequence GMRGTGKT. The segment at 1114 to 1341 is 3-dehydroquinase; that stretch reads LTYPDVRHAF…AAPGQLSFKQ (228 aa). Histidine 1243 serves as the catalytic Proton acceptor; for 3-dehydroquinate dehydratase activity. Lysine 1271 functions as the Schiff-base intermediate with substrate; for 3-dehydroquinate dehydratase activity in the catalytic mechanism. A shikimate dehydrogenase region spans residues 1354–1677; sequence SKHFHLFGTP…TRVWEKYGEV (324 aa).

In the N-terminal section; belongs to the sugar phosphate cyclases superfamily. Dehydroquinate synthase family. This sequence in the 2nd section; belongs to the EPSP synthase family. The protein in the 3rd section; belongs to the shikimate kinase family. It in the 4th section; belongs to the type-I 3-dehydroquinase family. In the C-terminal section; belongs to the shikimate dehydrogenase family. In terms of assembly, homodimer. The cofactor is Zn(2+).

It localises to the cytoplasm. The catalysed reaction is 7-phospho-2-dehydro-3-deoxy-D-arabino-heptonate = 3-dehydroquinate + phosphate. The enzyme catalyses 3-dehydroquinate = 3-dehydroshikimate + H2O. It carries out the reaction shikimate + NADP(+) = 3-dehydroshikimate + NADPH + H(+). It catalyses the reaction shikimate + ATP = 3-phosphoshikimate + ADP + H(+). The catalysed reaction is 3-phosphoshikimate + phosphoenolpyruvate = 5-O-(1-carboxyvinyl)-3-phosphoshikimate + phosphate. Its pathway is metabolic intermediate biosynthesis; chorismate biosynthesis; chorismate from D-erythrose 4-phosphate and phosphoenolpyruvate: step 2/7. The protein operates within metabolic intermediate biosynthesis; chorismate biosynthesis; chorismate from D-erythrose 4-phosphate and phosphoenolpyruvate: step 3/7. It functions in the pathway metabolic intermediate biosynthesis; chorismate biosynthesis; chorismate from D-erythrose 4-phosphate and phosphoenolpyruvate: step 4/7. It participates in metabolic intermediate biosynthesis; chorismate biosynthesis; chorismate from D-erythrose 4-phosphate and phosphoenolpyruvate: step 5/7. Its pathway is metabolic intermediate biosynthesis; chorismate biosynthesis; chorismate from D-erythrose 4-phosphate and phosphoenolpyruvate: step 6/7. Functionally, the AROM polypeptide catalyzes 5 consecutive enzymatic reactions in prechorismate polyaromatic amino acid biosynthesis. This chain is Pentafunctional AROM polypeptide, found in Coprinopsis cinerea (strain Okayama-7 / 130 / ATCC MYA-4618 / FGSC 9003) (Inky cap fungus).